We begin with the raw amino-acid sequence, 116 residues long: Cyclin-dependent protein kinase inhibitor SMR9 (116 aa).

Residues M1–F22 are compositionally biased toward basic residues. Residues M1 to T62 form a disordered region. The span at V35 to A56 shows a compositional bias: low complexity.

Its function is as follows. Probable cyclin-dependent protein kinase (CDK) inhibitor that functions as a repressor of mitosis in the endoreduplication cell cycle. The protein is Cyclin-dependent protein kinase inhibitor SMR9 of Arabidopsis thaliana (Mouse-ear cress).